Reading from the N-terminus, the 128-residue chain is Calcitonin gene-related peptide 1 (128 aa).

The N-terminal stretch at 1–25 is a signal peptide; the sequence is MGFLKFSPFLVVSILLLYQACGLQA. Residues 26-80 constitute a propeptide that is removed on maturation; it reads VPLRSTLESSPGMAATLSEEEARLLLAALVQNYMQMKVRELEQEQEAEGSSVTAQ. A disulfide bond links C84 and C89. F119 is subject to Phenylalanine amide. The propeptide occupies 125-128; it reads DLQA.

It belongs to the calcitonin family.

It localises to the secreted. Its function is as follows. CGRP1/CALCA is a peptide hormone that induces vasodilation mediated by the CALCRL-RAMP1 receptor complex. Dilates a variety of vessels including the coronary, cerebral and systemic vasculature. Its abundance in the CNS also points toward a neurotransmitter or neuromodulator role. It also elevates platelet cAMP. CGRP1 can also bind and activate CALCR-RAMP1 (AMYR1) receptor complex. The polypeptide is Calcitonin gene-related peptide 1 (Rattus norvegicus (Rat)).